The following is a 216-amino-acid chain: Uracil phosphoribosyltransferase (216 aa).

5-phospho-alpha-D-ribose 1-diphosphate-binding positions include arginine 85, arginine 110, and 135-143; that span reads DPMVATGYS. Uracil contacts are provided by residues isoleucine 200 and 205–207; that span reads GDA. Residue aspartate 206 participates in 5-phospho-alpha-D-ribose 1-diphosphate binding.

This sequence belongs to the UPRTase family. Mg(2+) serves as cofactor.

The catalysed reaction is UMP + diphosphate = 5-phospho-alpha-D-ribose 1-diphosphate + uracil. The protein operates within pyrimidine metabolism; UMP biosynthesis via salvage pathway; UMP from uracil: step 1/1. With respect to regulation, allosterically activated by GTP. Catalyzes the conversion of uracil and 5-phospho-alpha-D-ribose 1-diphosphate (PRPP) to UMP and diphosphate. This is Uracil phosphoribosyltransferase from Burkholderia multivorans (strain ATCC 17616 / 249).